The primary structure comprises 99 residues: Aspartyl/glutamyl-tRNA(Asn/Gln) amidotransferase subunit C (99 aa).

Belongs to the GatC family. As to quaternary structure, heterotrimer of A, B and C subunits.

The catalysed reaction is L-glutamyl-tRNA(Gln) + L-glutamine + ATP + H2O = L-glutaminyl-tRNA(Gln) + L-glutamate + ADP + phosphate + H(+). The enzyme catalyses L-aspartyl-tRNA(Asn) + L-glutamine + ATP + H2O = L-asparaginyl-tRNA(Asn) + L-glutamate + ADP + phosphate + 2 H(+). In terms of biological role, allows the formation of correctly charged Asn-tRNA(Asn) or Gln-tRNA(Gln) through the transamidation of misacylated Asp-tRNA(Asn) or Glu-tRNA(Gln) in organisms which lack either or both of asparaginyl-tRNA or glutaminyl-tRNA synthetases. The reaction takes place in the presence of glutamine and ATP through an activated phospho-Asp-tRNA(Asn) or phospho-Glu-tRNA(Gln). This chain is Aspartyl/glutamyl-tRNA(Asn/Gln) amidotransferase subunit C, found in Mycolicibacterium smegmatis (strain ATCC 700084 / mc(2)155) (Mycobacterium smegmatis).